The primary structure comprises 316 residues: Fe-S cluster assembly protein dre2 (316 aa).

An N-terminal SAM-like domain region spans residues M1–I128. Positions P129–M208 are linker. Residues S141–F177 form a disordered region. C218, C229, C232, and C234 together coordinate [2Fe-2S] cluster. Residues C218 to C234 form a fe-S binding site A region. The [4Fe-4S] cluster site is built by C279, C282, C290, and C293. 2 short sequence motifs (cx2C motif) span residues C279 to C282 and C290 to C293. The tract at residues C279 to C293 is fe-S binding site B.

Belongs to the anamorsin family. In terms of assembly, monomer. Interacts with TAH18. Interacts with MIA40. The cofactor is [2Fe-2S] cluster. It depends on [4Fe-4S] cluster as a cofactor.

It is found in the cytoplasm. It localises to the mitochondrion intermembrane space. Component of the cytosolic iron-sulfur (Fe-S) protein assembly (CIA) machinery required for the maturation of extramitochondrial Fe-S proteins. Part of an electron transfer chain functioning in an early step of cytosolic Fe-S biogenesis, facilitating the de novo assembly of a [4Fe-4S] cluster on the scaffold complex CFD1-NBP35. Electrons are transferred to DRE2 from NADPH via the FAD- and FMN-containing protein TAH18. TAH18-DRE2 are also required for the assembly of the diferric tyrosyl radical cofactor of ribonucleotide reductase (RNR), probably by providing electrons for reduction during radical cofactor maturation in the catalytic small subunit RNR2. This chain is Fe-S cluster assembly protein dre2, found in Pyrenophora tritici-repentis (strain Pt-1C-BFP) (Wheat tan spot fungus).